Here is a 1489-residue protein sequence, read N- to C-terminus: FERM domain-containing protein C (1489 aa).

2 stretches are compositionally biased toward polar residues: residues 59-79 (DTES…NFNS) and 103-118 (NSPL…STSI). Disordered regions lie at residues 59–86 (DTES…HQHL), 103–197 (NSPL…PSTL), 252–271 (NSVQ…NNNN), and 277–312 (EQQQ…TPDS). Residues 131-153 (SSSSSSSDGDSNSSSDSSDNSSE) show a composition bias toward low complexity. A compositionally biased stretch (basic residues) spans 163 to 172 (HLHLHRHHRK). Positions 181-195 (FESSSESSEQYGSPS) are enriched in low complexity. Residues 202–289 (ALKLEKIMQI…QEKQQQQQQH (88 aa)) are a coiled coil. Residues 277–287 (EQQQEKQQQQQ) are compositionally biased toward low complexity. Residues 303 to 312 (RSVSISTPDS) show a composition bias toward polar residues. Residues 356–383 (IKVSKVLEEEMQLQQEFEKQEQLRHSAR) are a coiled coil. Disordered stretches follow at residues 396-435 (NLQD…ENQN), 459-479 (VITP…KILT), and 508-569 (EDPL…TTTT). Residues 421 to 435 (ENVSNDNSSDNENQN) show a composition bias toward low complexity. Residues 545–555 (TASSSSSPTLQ) show a composition bias toward polar residues. The segment covering 556–569 (ATKTTTTTTTTTTT) has biased composition (low complexity). Positions 637–934 (ILVHISLVDQ…GYKYFIQHDE (298 aa)) constitute an FERM domain. 13 LRR repeats span residues 1017-1040 (KVEL…LKDT), 1053-1075 (ENLN…AFEP), 1087-1110 (HLNL…IEKY), 1111-1133 (PNIE…VILR), 1167-1191 (NKTI…IFEG), 1196-1219 (SLSL…KFIK), 1254-1278 (SCHI…VIKG), 1282-1306 (NQTI…LCQS), 1339-1362 (NKTI…AIGT), 1367-1391 (NETL…ILNG), 1395-1418 (NSTI…SLAN), 1428-1450 (VITL…QLST), and 1451-1474 (NIPI…IKNA).

In Dictyostelium discoideum (Social amoeba), this protein is FERM domain-containing protein C (frmC).